The following is a 191-amino-acid chain: Negative modulator of initiation of replication (191 aa).

Residues 96–97 form an interaction with DNA region; the sequence is AV.

Belongs to the SeqA family. As to quaternary structure, homodimer. Polymerizes to form helical filaments.

The protein resides in the cytoplasm. Its function is as follows. Negative regulator of replication initiation, which contributes to regulation of DNA replication and ensures that replication initiation occurs exactly once per chromosome per cell cycle. Binds to pairs of hemimethylated GATC sequences in the oriC region, thus preventing assembly of replication proteins and re-initiation at newly replicated origins. Repression is relieved when the region becomes fully methylated. The polypeptide is Negative modulator of initiation of replication (Shewanella amazonensis (strain ATCC BAA-1098 / SB2B)).